The sequence spans 460 residues: GTPase Der (460 aa).

2 EngA-type G domains span residues 9-171 (KTIA…SLNQ) and 199-370 (IQVG…ECFS). Residues 15 to 22 (GQPNVGKS), 62 to 66 (DTGGM), 123 to 126 (NKID), 205 to 212 (GRVNVGKS), 252 to 256 (DTAGI), and 316 to 319 (NKWD) each bind GTP. Residues 371-455 (RRIPTSLLNS…PLILNAKDKK (85 aa)) enclose the KH-like domain.

Belongs to the TRAFAC class TrmE-Era-EngA-EngB-Septin-like GTPase superfamily. EngA (Der) GTPase family. In terms of assembly, associates with the 50S ribosomal subunit.

GTPase that plays an essential role in the late steps of ribosome biogenesis. The polypeptide is GTPase Der (Helicobacter pylori (strain G27)).